Reading from the N-terminus, the 1218-residue chain is NACHT, LRR and PYD domains-containing protein 1a allele 3 (1218 aa).

Positions 1-29 (MGESQSKQESNTRVAQHGSQQDVDPTFQT) are enriched in polar residues. Disordered stretches follow at residues 1–44 (MGES…QVEQ) and 71–91 (EMDHESRRHSHQSKKKLDRSE). Residues 77–87 (RRHSHQSKKKL) show a composition bias toward basic residues. The region spanning 175-484 (QLVIIEGAAG…EFFAAMSYIL (310 aa)) is the NACHT domain. Residue 181-188 (GAAGIGKS) participates in ATP binding. LRR repeat units lie at residues 343–364 (KERNTIIDFNLIGSIPVLLTLC), 673–693 (NLEELDLSGNPLSYSAVRSLC), and 730–750 (RLAELDLRLNDLGDNGVRQLC). The span at 799 to 815 (TMPTENTDGEESLTSSK) shows a compositional bias: polar residues. Residues 799–842 (TMPTENTDGEESLTSSKQQQQQSGDKHMEPLGTDDDFWGPSGPV) form a disordered region. Residues 835–968 (FWGPSGPVST…HFAVLENPSF (134 aa)) form a ZU5 region. Positions 835 to 1118 (FWGPSGPVST…LRPALPRMAS (284 aa)) constitute an FIIND domain. A UPA region spans residues 969–1118 (SPMGVLLRMI…LRPALPRMAS (150 aa)). Residues 1122 to 1211 (DAPALLHFVD…HLIMDLLEKS (90 aa)) form the CARD domain.

Belongs to the NLRP family. Interacts (via LRR repeats) with BCL2 and BCL2L1 (via the loop between motifs BH4 and BH3). Interacts with NOD2; this interaction is enhanced in the presence of muramyl dipeptide (MDP) and increases IL1B release. Interacts with EIF2AK2/PKR; this interaction requires EIF2AK2 activity, is accompanied by EIF2AK2 autophosphorylation and promotes inflammasome assembly in response to danger-associated signals. Interacts with MEFV; this interaction targets Nlrp1a to degradation by autophagy, hence preventing excessive IL1B- and IL18-mediated inflammation. Interacts with DPP9; leading to inhibit activation of the inflammasome. DPP9 acts via formation of a ternary complex, composed of a DPP9 homodimer, one full-length NLRP1 protein, and one cleaved C-terminus of Nlrp1a (NACHT, LRR and PYD domains-containing protein 1a, C-terminus). Interacts with DPP8; leading to inhibit activation of the inflammasome, probably via formation of a ternary complex with DPP8. As to quaternary structure, interacts with the C-terminal part of Nlrp1a (NACHT, LRR and PYD domains-containing protein 1a, C-terminus) in absence of pathogens and other damage-associated signals. In terms of assembly, interacts with the N-terminal part of Nlrp1a (NACHT, LRR and PYD domains-containing protein 1a, N-terminus) in absence of pathogens and other damage-associated signals. Homomultimer; forms the Nlrp1a inflammasome polymeric complex, a filament composed of homopolymers of this form in response to pathogens and other damage-associated signals. The Nlrp1a inflammasome polymeric complex directly recruits pro-caspase-1 (proCASP1) independently of PYCARD/ASC. Interacts (via CARD domain) with CASP1 (via CARD domain); leading to CASP1 activation. In terms of processing, autocatalytically cleaved. Autocatalytic cleavage in FIIND region occurs constitutively, prior to activation signals, and is required for inflammasome activity (IL1B release), possibly by facilitating CASP1 binding. Both N- and C-terminal parts remain associated non-covalently. Ubiquitinated in response to pathogen-associated signals, leading to its degradation by the proteasome and subsequent release of the cleaved C-terminal part of the protein (NACHT, LRR and PYD domains-containing protein 1a, C-terminus), which polymerizes and forms the Nlrp1a inflammasome.

It is found in the cytoplasm. The protein resides in the cytosol. The protein localises to the nucleus. It localises to the inflammasome. With respect to regulation, activated by pathogens and other damage-associated signals: activation promotes ubiquitination and degradation of the N-terminal part, releasing the cleaved C-terminal part of the protein (NACHT, LRR and PYD domains-containing protein 1a, C-terminus), which polymerizes and forms the Nlrp1a inflammasome. Nlrp1a inflammasome is inhibited by DPP8 and DPP9, which sequester the C-terminal fragment of Nlrp1a (NACHT, LRR and PYD domains-containing protein 1a, C-terminus) in a ternary complex, thereby preventing Nlrp1a oligomerization and activation. Nlrp1a inflammasome is strongly activated by Val-boroPro (Talabostat, PT-100), an inhibitor of dipeptidyl peptidases DPP8 and DPP9. Val-boroPro relieves inhibition of DPP8 and/or DPP9 by promoting disruption of the ternary complex, releasing its C-terminal part from autoinhibition. Not activated by cleavage by B.anthracis lethal toxin (LT) endopeptidase. In terms of biological role, acts as the sensor component of the Nlrp1a inflammasome, which mediates inflammasome activation in response to various pathogen-associated signals, leading to subsequent pyroptosis. Inflammasomes are supramolecular complexes that assemble in the cytosol in response to pathogens and other damage-associated signals and play critical roles in innate immunity and inflammation. Acts as a recognition receptor (PRR): recognizes specific pathogens and other damage-associated signals, such as Val-boroPro inhibitor, and mediates the formation of the inflammasome polymeric complex. In response to pathogen-associated signals, the N-terminal part of Nlrp1a is degraded by the proteasome, releasing the cleaved C-terminal part of the protein (NACHT, LRR and PYD domains-containing protein 1a, C-terminus), which polymerizes to initiate the formation of the inflammasome complex: the inflammasome directly recruits pro-caspase-1 (proCASP1) independently of PYCARD/ASC and promotes caspase-1 (CASP1) activation, which subsequently cleaves and activates inflammatory cytokines IL1B and IL18 and gasdermin-D (GSDMD), leading to pyroptosis. In the absence of GSDMD expression, the Nlrp1a inflammasome is able to recruit and activate CASP8, leading to activation of gasdermin-E (GSDME). Its function is as follows. Constitutes the precursor of the Nlrp1a inflammasome, which mediates autoproteolytic processing within the FIIND domain to generate the N-terminal and C-terminal parts, which are associated non-covalently in absence of pathogens and other damage-associated signals. Functionally, regulatory part that prevents formation of the Nlrp1a inflammasome: in absence of pathogens and other damage-associated signals, interacts with the C-terminal part of Nlrp1a (NACHT, LRR and PYD domains-containing protein 1a, C-terminus), preventing activation of the Nlrp1a inflammasome. In response to pathogen-associated signals, this part is ubiquitinated by the N-end rule pathway and degraded by the proteasome, releasing the cleaved C-terminal part of the protein, which polymerizes and forms the Nlrp1a inflammasome. Constitutes the active part of the Nlrp1a inflammasome. In absence of pathogens and other damage-associated signals, interacts with the N-terminal part of Nlrp1a (NACHT, LRR and PYD domains-containing protein 1a, N-terminus), preventing activation of the Nlrp1a inflammasome. In response to pathogen-associated signals, the N-terminal part of Nlrp1a is degraded by the proteasome, releasing this form, which polymerizes to form the Nlrp1a inflammasome complex: the Nlrp1a inflammasome complex then directly recruits pro-caspase-1 (proCASP1) and promotes caspase-1 (CASP1) activation, leading to gasdermin-D (GSDMD) cleavage and subsequent pyroptosis. The chain is NACHT, LRR and PYD domains-containing protein 1a allele 3 from Rattus norvegicus (Rat).